Here is a 346-residue protein sequence, read N- to C-terminus: Carbamoyl phosphate synthase small chain (346 aa).

Residues 1–160 are CPSase; the sequence is MEDGSVFAGR…SVKEPVLLGE (160 aa). S39, G209, and G211 together coordinate L-glutamine. The region spanning 164 to 346 is the Glutamine amidotransferase type-1 domain; it reads CIGVVDCGVK…FLKLVERHGH (183 aa). The active-site Nucleophile is C237. L-glutamine-binding residues include L238, Q241, N280, G282, and Y283. Catalysis depends on residues H320 and E322.

This sequence belongs to the CarA family. As to quaternary structure, composed of two chains; the small (or glutamine) chain promotes the hydrolysis of glutamine to ammonia, which is used by the large (or ammonia) chain to synthesize carbamoyl phosphate. Tetramer of heterodimers (alpha,beta)4.

The catalysed reaction is hydrogencarbonate + L-glutamine + 2 ATP + H2O = carbamoyl phosphate + L-glutamate + 2 ADP + phosphate + 2 H(+). The enzyme catalyses L-glutamine + H2O = L-glutamate + NH4(+). It participates in amino-acid biosynthesis; L-arginine biosynthesis; carbamoyl phosphate from bicarbonate: step 1/1. Its pathway is pyrimidine metabolism; UMP biosynthesis via de novo pathway; (S)-dihydroorotate from bicarbonate: step 1/3. Small subunit of the glutamine-dependent carbamoyl phosphate synthetase (CPSase). CPSase catalyzes the formation of carbamoyl phosphate from the ammonia moiety of glutamine, carbonate, and phosphate donated by ATP, constituting the first step of 2 biosynthetic pathways, one leading to arginine and/or urea and the other to pyrimidine nucleotides. The small subunit (glutamine amidotransferase) binds and cleaves glutamine to supply the large subunit with the substrate ammonia. The sequence is that of Carbamoyl phosphate synthase small chain from Pyrobaculum aerophilum (strain ATCC 51768 / DSM 7523 / JCM 9630 / CIP 104966 / NBRC 100827 / IM2).